The following is a 374-amino-acid chain: UDP-N-acetylglucosamine--N-acetylmuramyl-(pentapeptide) pyrophosphoryl-undecaprenol N-acetylglucosamine transferase (374 aa).

UDP-N-acetyl-alpha-D-glucosamine-binding positions include 13–15 (TGG), asparagine 124, arginine 165, serine 193, and glutamine 294.

This sequence belongs to the glycosyltransferase 28 family. MurG subfamily.

The protein localises to the cell inner membrane. It carries out the reaction di-trans,octa-cis-undecaprenyl diphospho-N-acetyl-alpha-D-muramoyl-L-alanyl-D-glutamyl-meso-2,6-diaminopimeloyl-D-alanyl-D-alanine + UDP-N-acetyl-alpha-D-glucosamine = di-trans,octa-cis-undecaprenyl diphospho-[N-acetyl-alpha-D-glucosaminyl-(1-&gt;4)]-N-acetyl-alpha-D-muramoyl-L-alanyl-D-glutamyl-meso-2,6-diaminopimeloyl-D-alanyl-D-alanine + UDP + H(+). It functions in the pathway cell wall biogenesis; peptidoglycan biosynthesis. In terms of biological role, cell wall formation. Catalyzes the transfer of a GlcNAc subunit on undecaprenyl-pyrophosphoryl-MurNAc-pentapeptide (lipid intermediate I) to form undecaprenyl-pyrophosphoryl-MurNAc-(pentapeptide)GlcNAc (lipid intermediate II). The chain is UDP-N-acetylglucosamine--N-acetylmuramyl-(pentapeptide) pyrophosphoryl-undecaprenol N-acetylglucosamine transferase from Rhizobium johnstonii (strain DSM 114642 / LMG 32736 / 3841) (Rhizobium leguminosarum bv. viciae).